The primary structure comprises 65 residues: MKVFVLLTLAVLLMVSADMAFAGFGCPGNQLKCNNHCKSISCRAGYCDAATLWLRCTCTDCNGKK.

An N-terminal signal peptide occupies residues 1–22 (MKVFVLLTLAVLLMVSADMAFA). Phe-24, Gly-25, and Cys-26 together coordinate beta-D-GlcNAc-(1-&gt;4)-Mur2Ac(oyl-L-Ala-gamma-D-Glu-L-Lys-D-Ala-D-Ala)-di-trans,octa-cis-undecaprenyl diphosphate. Disulfide bonds link Cys-26–Cys-47, Cys-33–Cys-56, Cys-37–Cys-58, and Cys-42–Cys-61. Positions 27–30 (PGNQ) are binds to membrane interface. His-36 is a beta-D-GlcNAc-(1-&gt;4)-Mur2Ac(oyl-L-Ala-gamma-D-Glu-L-Lys-D-Ala-D-Ala)-di-trans,octa-cis-undecaprenyl diphosphate binding site. The interval 48–54 (DAATLWL) is binds to membrane interface. Position 56 (Cys-56) interacts with beta-D-GlcNAc-(1-&gt;4)-Mur2Ac(oyl-L-Ala-gamma-D-Glu-L-Lys-D-Ala-D-Ala)-di-trans,octa-cis-undecaprenyl diphosphate.

The protein belongs to the invertebrate defensin family. As to expression, expressed in the mantle. Low or no expression in most of the organs analyzed, including hemocytes, heart, digestive gland, and gills.

The protein resides in the secreted. It is found in the target cell membrane. Its function is as follows. Antibacterial peptide mostly active against Gram-positive bacteria (M.lysodeikticus, S.aureus, and the marine bacteria, B.stationis, and M.maritypicum). It acts by selectively inhibiting peptidoglycan biosynthesis through complex formation with the cell wall precursor lipid II (1:1 molar ratio) thus inhibiting cell wall synthesis. It does not disrupt cell membranes. Is noticeably more potent than Cg-Defh1. It shows no or limited activities against Gram-negative bacteria and filamentous fungi. The polypeptide is Defensin Cg-Defm (Magallana gigas (Pacific oyster)).